Here is a 445-residue protein sequence, read N- to C-terminus: Neuropeptide Y receptor type 5 (445 aa).

Residues 1–42 (MEFKLEEHFNKTFVTENNTAAARNAAFPAWEDYRGSVDDLQY) are Extracellular-facing. Asn10 and Asn17 each carry an N-linked (GlcNAc...) asparagine glycan. The helical transmembrane segment at 43–63 (FLIGLYTFVSLLGFMGNLLIL) threads the bilayer. The Cytoplasmic segment spans residues 64 to 77 (MAVMKKRNQKTTVN). Residues 78–98 (FLIGNLAFSDILVVLFCSPFT) traverse the membrane as a helical segment. Residues 99–117 (LTSVLLDQWMFGKAMCHIM) lie on the Extracellular side of the membrane. A disulfide bridge connects residues Cys114 and Cys198. The chain crosses the membrane as a helical span at residues 118–138 (PFLQCVSVLVSTLILISIAIV). Over 139-156 (RYHMIKHPISNNLTANHG) the chain is Cytoplasmic. Residues 157–177 (YFLIATVWTLGFAICSPLPVF) form a helical membrane-spanning segment. Residues 178–208 (HSLVELKETFGSALLSSKYLCVESWPSDSYR) lie on the Extracellular side of the membrane. The chain crosses the membrane as a helical span at residues 209–229 (IAFTISLLLVQYILPLVCLTV). The Cytoplasmic segment spans residues 230-368 (SHTSVCRSIS…KKRSRSVFYR (139 aa)). Residues 369-389 (LTILILVFAVSWMPLHVFHVV) traverse the membrane as a helical segment. Residues 390 to 406 (TDFNDNLISNRHFKLVY) are Extracellular-facing. The chain crosses the membrane as a helical span at residues 407–427 (CICHLLGMMSCCLNPILYGFL). Over 428–445 (NNGIKADLRALIHCLHMS) the chain is Cytoplasmic. Cys441 is lipidated: S-palmitoyl cysteine.

It belongs to the G-protein coupled receptor 1 family. As to expression, brain; hypothalamus.

It localises to the cell membrane. Receptor for neuropeptide Y and peptide YY. The activity of this receptor is mediated by G proteins that inhibit adenylate cyclase activity. Seems to be associated with food intake. Could be involved in feeding disorders. The polypeptide is Neuropeptide Y receptor type 5 (Npy5r) (Rattus norvegicus (Rat)).